The primary structure comprises 90 residues: MNADGPVVNVHVLFFAKSRELANTPRSKVDLPTEITASDLLELLVSKFGLTPIRDNLILAHNESYIDNLSERILFKEGDELAIIPPLSGG.

Residue Gly-90 is modified to 1-thioglycine; alternate. At Gly-90 the chain carries Glycyl adenylate; alternate.

The protein belongs to the MoaD family. MOCS2A subfamily. As to quaternary structure, heterotetramer; composed of 2 small (Mocs2A) and 2 large (Mocs2B) subunits. Post-translationally, C-terminal thiocarboxylation occurs in 2 steps, it is first acyl-adenylated (-COAMP) via the hesA/moeB/thiF part of MOCS3, then thiocarboxylated (-COSH) via the rhodanese domain of MOCS3.

The protein resides in the cytoplasm. The protein operates within cofactor biosynthesis; molybdopterin biosynthesis. Functionally, acts as a sulfur carrier required for molybdopterin biosynthesis. Component of the molybdopterin synthase complex that catalyzes the conversion of precursor Z into molybdopterin by mediating the incorporation of 2 sulfur atoms into precursor Z to generate a dithiolene group. In the complex, serves as sulfur donor by being thiocarboxylated (-COSH) at its C-terminus by MOCS3. After interaction with Mocs2B, the sulfur is then transferred to precursor Z to form molybdopterin. This is Molybdopterin synthase sulfur carrier subunit from Drosophila yakuba (Fruit fly).